A 447-amino-acid polypeptide reads, in one-letter code: UPF0210 protein LCK_00974 (447 aa).

Belongs to the UPF0210 family. As to quaternary structure, homodimer.

The chain is UPF0210 protein LCK_00974 from Leuconostoc citreum (strain KM20).